The following is a 360-amino-acid chain: Glutamate 5-kinase (360 aa).

Lys7 serves as a coordination point for ATP. Substrate contacts are provided by Ser47, Asp134, and Asn146. Residues Thr166–Asp167 and Thr208–Lys214 contribute to the ATP site. Positions Val273–Thr344 constitute a PUA domain.

This sequence belongs to the glutamate 5-kinase family.

It localises to the cytoplasm. It carries out the reaction L-glutamate + ATP = L-glutamyl 5-phosphate + ADP. Its pathway is amino-acid biosynthesis; L-proline biosynthesis; L-glutamate 5-semialdehyde from L-glutamate: step 1/2. Functionally, catalyzes the transfer of a phosphate group to glutamate to form L-glutamate 5-phosphate. In Prochlorococcus marinus (strain NATL2A), this protein is Glutamate 5-kinase.